The primary structure comprises 1196 residues: Sorbin and SH3 domain-containing protein 2 (1196 aa).

2 disordered regions span residues 25-57 and 75-95; these read VQSS…ETLN and PNLQ…GNSG. Phosphoserine is present on residues S27, S28, and S40. Polar residues predominate over residues 83 to 92; it reads PTQSHITING. Phosphoserine is present on residues S130 and S143. M148 bears the Alanine amide mark. Residues 166-227 enclose the SoHo domain; sequence VIKAPHYPGI…YNTPYTYNAG (62 aa). Positions 235–247 are enriched in polar residues; that stretch reads AQSHPAAKTQTYR. Disordered stretches follow at residues 235-314 and 329-407; these read AQSH…EPGK and SSID…GDDS. 2 stretches are compositionally biased toward basic and acidic residues: residues 252 to 262 and 276 to 312; these read SHSDNGTDAFK and RPRD…EYEP. At S254 the chain carries Phosphoserine. Polar residues predominate over residues 329–343; it reads SSIDRSLERPSSSAS. Residues S334, S340, S343, and S354 each carry the phosphoserine modification. At T372 the chain carries Phosphothreonine. S382 carries the post-translational modification Phosphoserine. Residues 382–399 show a composition bias toward low complexity; the sequence is SSSTFTTSFISSSPSSPS. T387 is subject to Phosphothreonine. S392, S393, S394, S396, S397, S399, S478, S589, S592, S645, S648, S844, and S938 each carry phosphoserine. Residues 929-958 are disordered; the sequence is QDHESPRSYSSTLTDLGRSVSRERRGTPEK. Residues 948–958 show a composition bias toward basic and acidic residues; it reads VSRERRGTPEK. SH3 domains are found at residues 959–1018 and 1034–1095; these read EVKL…KLTP and GEIG…VVKR. S1113 and S1119 each carry phosphoserine. In terms of domain architecture, SH3 3 spans 1137-1196; that stretch reads GGGEPFQALYNYTPRNEDELELRESDVVDVMEKCDDGWFVGTSRRTKFFGTFPGNYVKRL.

Interacts with ABL1/c-Abl, ABL2/v-Abl/Arg, ACTN, CBL and PALLD. Interacts with ABL, CBL, DNM1, DNM2, FLOT1, AFDN, PTK2B/PYK2, SAPAP, SPTAN1, SYNJ1, SYNJ2, VCL/vinculin and WASF. Interacts with PTPN12 and WASF1 via its SH3 domains; this interaction may mediate the partial PTPN12 and WASF1 translocation to focal adhesion sites. Ubiquitinated by CBL. In terms of tissue distribution, expressed in brain; found in synapses in cerebellum.

It is found in the cytoplasm. The protein resides in the perinuclear region. The protein localises to the apical cell membrane. Its subcellular location is the cell junction. It localises to the focal adhesion. It is found in the cell projection. The protein resides in the lamellipodium. Functionally, adapter protein that plays a role in the assembling of signaling complexes, being a link between ABL kinases and actin cytoskeleton. Can form complex with ABL1 and CBL, thus promoting ubiquitination and degradation of ABL1. May play a role in the regulation of pancreatic cell adhesion, possibly by acting on WASF1 phosphorylation, enhancing phosphorylation by ABL1, as well as dephosphorylation by PTPN12. Isoform 2 increases water and sodium absorption in the intestine and gall-bladder. The sequence is that of Sorbin and SH3 domain-containing protein 2 (Sorbs2) from Rattus norvegicus (Rat).